The following is a 203-amino-acid chain: FMN-dependent NADH:quinone oxidoreductase (203 aa).

FMN-binding positions include S9, 15–17, and 138–141; these read SVS and SRGG.

The protein belongs to the azoreductase type 1 family. In terms of assembly, homodimer. FMN serves as cofactor.

The enzyme catalyses 2 a quinone + NADH + H(+) = 2 a 1,4-benzosemiquinone + NAD(+). It catalyses the reaction N,N-dimethyl-1,4-phenylenediamine + anthranilate + 2 NAD(+) = 2-(4-dimethylaminophenyl)diazenylbenzoate + 2 NADH + 2 H(+). Its function is as follows. Quinone reductase that provides resistance to thiol-specific stress caused by electrophilic quinones. Also exhibits azoreductase activity. Catalyzes the reductive cleavage of the azo bond in aromatic azo compounds to the corresponding amines. The protein is FMN-dependent NADH:quinone oxidoreductase of Methylorubrum extorquens (strain CM4 / NCIMB 13688) (Methylobacterium extorquens).